The primary structure comprises 280 residues: MSYANLEQTIEAAWEERAGISTATTGAVREAVDEALNLLDSGKARVAEKAGDAWQVNQWLKKAVLLSFRLNDMVPIEGGPGSSAWWDKVPSKFSGWGETEFRAAGFRAVPGCFVRRGSYIAPGAVLMPSFINLGAHVGEGTMVDTWVTIGSCAQVGKNCHISGGAGIAGVLEPLQANPVIIEDNCFIGARAEVAEGVIVGEGSVLSMGVYIGASTRIIDRTTGETFYGRVPPYSVVVSGTTPGKPLPDGTPGPGLYCAVIVKRVDAGTRAKTGINELLRT.

The protein belongs to the transferase hexapeptide repeat family.

The protein localises to the cytoplasm. It carries out the reaction (S)-2,3,4,5-tetrahydrodipicolinate + succinyl-CoA + H2O = (S)-2-succinylamino-6-oxoheptanedioate + CoA. It participates in amino-acid biosynthesis; L-lysine biosynthesis via DAP pathway; LL-2,6-diaminopimelate from (S)-tetrahydrodipicolinate (succinylase route): step 1/3. This is 2,3,4,5-tetrahydropyridine-2,6-dicarboxylate N-succinyltransferase from Methylorubrum populi (strain ATCC BAA-705 / NCIMB 13946 / BJ001) (Methylobacterium populi).